Here is a 604-residue protein sequence, read N- to C-terminus: Serine/threonine-protein kinase A-Raf (604 aa).

An RBD domain is found at 19 to 91 (GTVKVYLPNK…DGEELIVEVL (73 aa)). The Phorbol-ester/DAG-type zinc finger occupies 98–144 (MHNFVRKTFFSLAFCDFCLKFLFHGFRCQTCGYKFHQHCSSKVPTVC). 8 residues coordinate Zn(2+): H99, C112, C115, C125, C128, H133, C136, and C144. 2 positions are modified to phosphoserine: S157 and S162. 2 disordered regions span residues 178 to 222 (ELLT…HMVS) and 241 to 287 (TDAA…DEKK). T181 bears the Phosphothreonine mark. Position 186 is a phosphoserine (S186). Residues 210 to 222 (IRSTSTPNVHMVS) are compositionally biased toward polar residues. The segment covering 252–265 (PRGSPSPASVSSGR) has biased composition (low complexity). A phosphoserine mark is found at S255 and S267. The segment covering 272–287 (LPAEQRERKSLADEKK) has biased composition (basic and acidic residues). The Protein kinase domain maps to 308–568 (VQLLKRIGTG…PQILATIELL (261 aa)). ATP is bound by residues 314–322 (IGTGSFGTV) and K334. Residue T316 is modified to Phosphothreonine. D427 (proton acceptor) is an active-site residue.

This sequence belongs to the protein kinase superfamily. TKL Ser/Thr protein kinase family. RAF subfamily. In terms of assembly, interacts with TH1L/NELFD. It depends on Zn(2+) as a cofactor. Post-translationally, dephosphorylation by the SHOC2-MRAS-PP1c (SMP) complex consisting of SHOC2, GTP-bound M-Ras/MRAS and the catalytic subunit of protein phosphatase 1 (PPP1CA, PPP1CB or PPP1CC); this relieves inactivation and stimulates kinase activity.

The enzyme catalyses L-seryl-[protein] + ATP = O-phospho-L-seryl-[protein] + ADP + H(+). The catalysed reaction is L-threonyl-[protein] + ATP = O-phospho-L-threonyl-[protein] + ADP + H(+). In terms of biological role, involved in the transduction of mitogenic signals from the cell membrane to the nucleus. May also regulate the TOR signaling cascade. Phosphorylates PFKFB2. The sequence is that of Serine/threonine-protein kinase A-Raf (Araf) from Rattus norvegicus (Rat).